The following is a 1581-amino-acid chain: ATP-binding cassette sub-family C member 8 (1581 aa).

The Extracellular portion of the chain corresponds to M1–A30. A disulfide bridge links C6 with C26. The N-linked (GlcNAc...) asparagine glycan is linked to N10. The helical transmembrane segment at L31–L47 threads the bilayer. Topologically, residues F48–N72 are cytoplasmic. Residues L73–I89 traverse the membrane as a helical segment. The Extracellular portion of the chain corresponds to A90–L106. A helical membrane pass occupies residues Y107 to Y123. The Cytoplasmic segment spans residues Y124–L136. The helical transmembrane segment at I137 to K153 threads the bilayer. Residues F154 to F169 lie on the Extracellular side of the membrane. The chain crosses the membrane as a helical span at residues C170–E186. The Cytoplasmic portion of the chain corresponds to V187–S303. The ABC transmembrane type-1 1 domain maps to L299–K602. A helical transmembrane segment spans residues T304–C319. At I320 to Y356 the chain is on the extracellular side. A helical transmembrane segment spans residues V357 to F372. Residues L373 to L438 lie on the Cytoplasmic side of the membrane. A helical transmembrane segment spans residues W439 to Y454. Topologically, residues I455–A460 are extracellular. A helical membrane pass occupies residues L461–V473. The Cytoplasmic segment spans residues Q474–S541. A helical transmembrane segment spans residues I542–I557. Over T558–A576 the chain is Extracellular. Residues F577 to L592 form a helical membrane-spanning segment. Over L593–L1012 the chain is Cytoplasmic. In terms of domain architecture, ABC transporter 1 spans V679 to T929. The ATP site is built by W688, G716, S720, and S721. S720 lines the Mg(2+) pocket. Q774 provides a ligand contact to Mg(2+). Residues D935–T949 are compositionally biased toward basic and acidic residues. The tract at residues D935 to S987 is disordered. The segment covering L966–N984 has biased composition (acidic residues). The 295-residue stretch at L1012–L1306 folds into the ABC transmembrane type-1 2 domain. The helical transmembrane segment at S1013–D1030 threads the bilayer. Topologically, residues Y1031 to V1066 are extracellular. Residue N1049 is glycosylated (N-linked (GlcNAc...) asparagine). A helical membrane pass occupies residues F1067 to V1083. Residues T1084–L1142 are Cytoplasmic-facing. Residues S1143–T1160 traverse the membrane as a helical segment. Residue P1161 is a topological domain, extracellular. The chain crosses the membrane as a helical span at residues V1162–C1174. Residues Y1175–E1248 lie on the Cytoplasmic side of the membrane. A helical transmembrane segment spans residues V1249–V1264. The Extracellular portion of the chain corresponds to T1265–V1280. The helical transmembrane segment at G1281–W1296 threads the bilayer. At M1297–K1581 the chain is on the cytoplasmic side. The ABC transporter 2 domain occupies I1344–R1578. ADP-binding residues include T1380, G1381, G1383, K1384, S1385, and S1386. Residue S1482 participates in ATP binding.

Belongs to the ABC transporter superfamily. ABCC family. Conjugate transporter (TC 3.A.1.208) subfamily. As to quaternary structure, forms an heterooctamer with KCNJ11; four ABCC8/SUR1 molecules interact with one KCNJ11 homotetramer.

It localises to the cell membrane. With respect to regulation, KATP channels are regulated by cytoplasmic ATP/ADP ratios; ATP inhibits the channel by closing the pore, while ADP activates the channel. Activated by phosphatidylinositol 4,5-biphosphate (PtdIns(4,5)P2). Regulator subunit of pancreatic ATP-sensitive potassium channel (KATP), playing a major role in the regulation of insulin release. In pancreatic cells, it forms KATP channels with KCNJ11; KCNJ11 forms the channel pore while ABCC8 is required for activation and regulation. The polypeptide is ATP-binding cassette sub-family C member 8 (ABCC8) (Homo sapiens (Human)).